Consider the following 274-residue polypeptide: Large ribosomal subunit protein uL2 (274 aa).

The interval 221-274 (RGTAMNPVDHPHGGGEGRNFGKHPVTPWGVQTKGKKTRNNKRTDKSIVRRRSKK) is disordered.

This sequence belongs to the universal ribosomal protein uL2 family. Part of the 50S ribosomal subunit. Forms a bridge to the 30S subunit in the 70S ribosome.

One of the primary rRNA binding proteins. Required for association of the 30S and 50S subunits to form the 70S ribosome, for tRNA binding and peptide bond formation. It has been suggested to have peptidyltransferase activity; this is somewhat controversial. Makes several contacts with the 16S rRNA in the 70S ribosome. This chain is Large ribosomal subunit protein uL2, found in Hamiltonella defensa subsp. Acyrthosiphon pisum (strain 5AT).